Here is a 238-residue protein sequence, read N- to C-terminus: Probable amino-acid ABC transporter permease protein y4tF (238 aa).

The region spanning 29–223 (AWVTIQFTLY…GIALVLSFFM (195 aa)) is the ABC transmembrane type-1 domain. The next 5 membrane-spanning stretches (helical) occupy residues 33–53 (IQFT…FGIG), 77–97 (LLVQ…MMGI), 103–123 (PVVA…AEIV), 152–172 (VALP…AIAA), and 203–223 (TVYT…SFFM).

Belongs to the binding-protein-dependent transport system permease family. HisMQ subfamily.

It localises to the cell inner membrane. Its function is as follows. Probably part of the binding-protein-dependent transport system y4tEFGH for an amino acid. Probably responsible for the translocation of the substrate across the membrane. The sequence is that of Probable amino-acid ABC transporter permease protein y4tF from Sinorhizobium fredii (strain NBRC 101917 / NGR234).